The chain runs to 539 residues: Chaperonin GroEL (539 aa).

ATP is bound by residues 29-32, 86-90, G413, 476-478, and D492; these read TIGP, DGTTT, and NAA.

It belongs to the chaperonin (HSP60) family. In terms of assembly, forms a cylinder of 14 subunits composed of two heptameric rings stacked back-to-back. Interacts with the co-chaperonin GroES.

The protein resides in the cytoplasm. It catalyses the reaction ATP + H2O + a folded polypeptide = ADP + phosphate + an unfolded polypeptide.. Functionally, together with its co-chaperonin GroES, plays an essential role in assisting protein folding. The GroEL-GroES system forms a nano-cage that allows encapsulation of the non-native substrate proteins and provides a physical environment optimized to promote and accelerate protein folding. This chain is Chaperonin GroEL, found in Staphylococcus epidermidis.